Here is a 397-residue protein sequence, read N- to C-terminus: N-acetyllactosaminide beta-1,3-N-acetylglucosaminyltransferase 2 (397 aa).

Topologically, residues 1-7 (MSVGRRR) are cytoplasmic. The helical; Signal-anchor for type II membrane protein transmembrane segment at 8 to 28 (IKLLGILMMANVFIYFIMEVS) threads the bilayer. Residues 29-397 (KSSSQEKNGK…SQLQSAHLKC (369 aa)) lie on the Lumenal side of the membrane. N-linked (GlcNAc...) asparagine glycosylation is found at N79, N89, N127, N173, and N219.

This sequence belongs to the glycosyltransferase 31 family. As to quaternary structure, interacts with B3GNT8; this interaction greatly increases B3GNT2 catalytic activity, independently of B3GNT8 enzymatic activity. The cofactor is Mn(2+). In terms of tissue distribution, ubiquitous.

It is found in the golgi apparatus membrane. It catalyses the reaction a beta-D-galactosyl-(1-&gt;4)-N-acetyl-beta-D-glucosaminyl derivative + UDP-N-acetyl-alpha-D-glucosamine = an N-acetyl-beta-D-glucosaminyl-(1-&gt;3)-beta-D-galactosyl-(1-&gt;4)-N-acetyl-beta-D-glucosaminyl derivative + UDP + H(+). The protein operates within protein modification; protein glycosylation. Its function is as follows. Beta-1,3-N-acetylglucosaminyltransferase involved in the synthesis of poly-N-acetyllactosamine. Catalyzes the initiation and elongation of poly-N-acetyllactosamine chains. Shows a marked preference for Gal(beta1-4)Glc(NAc)-based acceptors. Probably constitutes the main polylactosamine synthase. This Homo sapiens (Human) protein is N-acetyllactosaminide beta-1,3-N-acetylglucosaminyltransferase 2 (B3GNT2).